A 294-amino-acid polypeptide reads, in one-letter code: N-acetylmuramic acid 6-phosphate etherase (294 aa).

Residues 54 to 217 (VISSFQNGGR…STASMIGIGK (164 aa)) form the SIS domain. Glutamate 82 functions as the Proton donor in the catalytic mechanism. Glutamate 113 is a catalytic residue.

It belongs to the GCKR-like family. MurNAc-6-P etherase subfamily. Homodimer.

The catalysed reaction is N-acetyl-D-muramate 6-phosphate + H2O = N-acetyl-D-glucosamine 6-phosphate + (R)-lactate. The protein operates within amino-sugar metabolism; N-acetylmuramate degradation. Its function is as follows. Specifically catalyzes the cleavage of the D-lactyl ether substituent of MurNAc 6-phosphate, producing GlcNAc 6-phosphate and D-lactate. This is N-acetylmuramic acid 6-phosphate etherase from Bacillus cytotoxicus (strain DSM 22905 / CIP 110041 / 391-98 / NVH 391-98).